The sequence spans 331 residues: Thiamine thiazole synthase (331 aa).

Residues Cys-86, 107–108 (EA), Gly-115, and Val-183 contribute to the substrate site. The residue at position 220 (Cys-220) is a 2,3-didehydroalanine (Cys). Residues Asp-222, His-237, Met-289, and 299–301 (RMG) each bind substrate.

The protein belongs to the THI4 family. Homooctamer. Fe cation is required as a cofactor. In terms of processing, during the catalytic reaction, a sulfide is transferred from Cys-220 to a reaction intermediate, generating a dehydroalanine residue.

The protein localises to the cytoplasm. It localises to the nucleus. It catalyses the reaction [ADP-thiazole synthase]-L-cysteine + glycine + NAD(+) = [ADP-thiazole synthase]-dehydroalanine + ADP-5-ethyl-4-methylthiazole-2-carboxylate + nicotinamide + 3 H2O + 2 H(+). Functionally, involved in biosynthesis of the thiamine precursor thiazole. Catalyzes the conversion of NAD and glycine to adenosine diphosphate 5-(2-hydroxyethyl)-4-methylthiazole-2-carboxylic acid (ADT), an adenylated thiazole intermediate. The reaction includes an iron-dependent sulfide transfer from a conserved cysteine residue of the protein to a thiazole intermediate. The enzyme can only undergo a single turnover, which suggests it is a suicide enzyme. May have additional roles in adaptation to various stress conditions and in DNA damage tolerance. In Emericella nidulans (strain FGSC A4 / ATCC 38163 / CBS 112.46 / NRRL 194 / M139) (Aspergillus nidulans), this protein is Thiamine thiazole synthase.